A 689-amino-acid polypeptide reads, in one-letter code: DNA-directed RNA polymerase subunit beta' (689 aa).

Zn(2+) contacts are provided by Cys76, Cys78, Cys94, and Cys97. 3 residues coordinate Mg(2+): Asp496, Asp498, and Asp500.

This sequence belongs to the RNA polymerase beta' chain family. RpoC1 subfamily. In plastids the minimal PEP RNA polymerase catalytic core is composed of four subunits: alpha, beta, beta', and beta''. When a (nuclear-encoded) sigma factor is associated with the core the holoenzyme is formed, which can initiate transcription. Mg(2+) serves as cofactor. The cofactor is Zn(2+).

Its subcellular location is the plastid. It localises to the chloroplast. It catalyses the reaction RNA(n) + a ribonucleoside 5'-triphosphate = RNA(n+1) + diphosphate. DNA-dependent RNA polymerase catalyzes the transcription of DNA into RNA using the four ribonucleoside triphosphates as substrates. This Illicium oligandrum (Star anise) protein is DNA-directed RNA polymerase subunit beta'.